The sequence spans 1026 residues: Contactin-4 (1026 aa).

The signal sequence occupies residues 1 to 18 (MRLPWELLVLQSFILCLA). Ig-like C2-type domains lie at 32–117 (PSPV…AKLQ), 122–207 (DNFK…KVLG), 225–311 (PKIE…GQLT), 316–400 (PNWI…AELS), 406–493 (PDFS…GNLV), and 497–586 (PTRV…DRLS). Cystine bridges form between Cys-50-Cys-100, Cys-144-Cys-194, Cys-247-Cys-295, Cys-337-Cys-384, Cys-429-Cys-477, and Cys-519-Cys-576. Residues Asn-65, Asn-90, and Asn-191 are each glycosylated (N-linked (GlcNAc...) asparagine). Asn-370, Asn-375, and Asn-466 each carry an N-linked (GlcNAc...) asparagine glycan. Fibronectin type-III domains follow at residues 599-697 (PPEA…TEEA), 702-799 (TPAN…SAEE), 804-899 (PPAS…TRKP), and 900-995 (PPSQ…ISNA). The interval 685–710 (PSRPSEKRRTEEALPEVTPANVSGGG) is disordered. A compositionally biased stretch (basic and acidic residues) spans 687–696 (RPSEKRRTEE). Residues Asn-705, Asn-764, Asn-858, Asn-893, Asn-911, Asn-929, and Asn-954 are each glycosylated (N-linked (GlcNAc...) asparagine). The segment covering 886–896 (GPSSATVNVTT) has biased composition (polar residues). The disordered stretch occupies residues 886-907 (GPSSATVNVTTRKPPPSQPPGN). The GPI-anchor amidated serine moiety is linked to residue Ser-1000. The propeptide at 1001 to 1026 (GASTSNACTLSAISTIMISLTARSSL) is removed in mature form.

The protein belongs to the immunoglobulin superfamily. Contactin family. As to quaternary structure, interacts with PTPRG. As to expression, mainly expressed in brain. Highly expressed in cerebellum and weakly expressed in corpus callosum, caudate nucleus, amygdala and spinal cord. Also expressed in testis, pancreas, thyroid, uterus, small intestine and kidney. Not expressed in skeletal muscle. Isoform 2 is weakly expressed in cerebral cortex.

It localises to the cell membrane. The protein localises to the secreted. Its function is as follows. Contactins mediate cell surface interactions during nervous system development. Has some neurite outgrowth-promoting activity. May be involved in synaptogenesis. This is Contactin-4 (CNTN4) from Homo sapiens (Human).